Consider the following 349-residue polypeptide: Isopentenyl-diphosphate delta-isomerase (349 aa).

5 to 6 (RK) lines the substrate pocket. Residues Ser61, 62-64 (SMT), Ser92, and Asn120 contribute to the FMN site. Residue 92-94 (SMR) coordinates substrate. Gln159 lines the substrate pocket. Glu160 is a binding site for Mg(2+). FMN contacts are provided by residues Lys189, Thr219, 269–271 (GLR), and 290–291 (AR).

Belongs to the IPP isomerase type 2 family. As to quaternary structure, homooctamer. Dimer of tetramers. FMN is required as a cofactor. NADPH serves as cofactor. The cofactor is Mg(2+).

The protein resides in the cytoplasm. It catalyses the reaction isopentenyl diphosphate = dimethylallyl diphosphate. Its function is as follows. Involved in the biosynthesis of isoprenoids. Catalyzes the 1,3-allylic rearrangement of the homoallylic substrate isopentenyl (IPP) to its allylic isomer, dimethylallyl diphosphate (DMAPP). The sequence is that of Isopentenyl-diphosphate delta-isomerase from Picrophilus torridus (strain ATCC 700027 / DSM 9790 / JCM 10055 / NBRC 100828 / KAW 2/3).